We begin with the raw amino-acid sequence, 320 residues long: Ribosome production factor 2 homolog (320 aa).

A Brix domain is found at 30-234 (RTMLFLDGRK…IRRTKIASED (205 aa)). Residues 268–320 (LGKQQTGSIQTRRVKALRKTPEEKKENRQRKKVALKAAAAEALASQGNNPFSS) are disordered. The segment covering 302–311 (LKAAAAEALA) has biased composition (low complexity).

Belongs to the RPF2 family.

Its subcellular location is the nucleus. It localises to the nucleolus. Its function is as follows. Required for normal assembly of the mitotic spindle. May be involved in both centrosome-dependent and centrosome-independent spindle assembly programs. This Drosophila melanogaster (Fruit fly) protein is Ribosome production factor 2 homolog.